A 156-amino-acid chain; its full sequence is Cyclic pyranopterin monophosphate synthase (156 aa).

Residues leucine 75–histidine 77 and methionine 111–glutamate 112 each bind substrate. The active site involves aspartate 126.

The protein belongs to the MoaC family. In terms of assembly, homohexamer; trimer of dimers.

The catalysed reaction is (8S)-3',8-cyclo-7,8-dihydroguanosine 5'-triphosphate = cyclic pyranopterin phosphate + diphosphate. It participates in cofactor biosynthesis; molybdopterin biosynthesis. In terms of biological role, catalyzes the conversion of (8S)-3',8-cyclo-7,8-dihydroguanosine 5'-triphosphate to cyclic pyranopterin monophosphate (cPMP). This is Cyclic pyranopterin monophosphate synthase from Corynebacterium glutamicum (strain ATCC 13032 / DSM 20300 / JCM 1318 / BCRC 11384 / CCUG 27702 / LMG 3730 / NBRC 12168 / NCIMB 10025 / NRRL B-2784 / 534).